Consider the following 720-residue polypeptide: ATP-dependent RNA helicase glh-3 (720 aa).

Polar residues predominate over residues 1–11 (MDKSPTKTSIR). Disordered stretches follow at residues 1 to 34 (MDKSPTKTSIRTKFARHQPISDVDTTEQSSSCIK) and 125 to 180 (LNSR…SYGN). Basic and acidic residues-rich tracts occupy residues 141-154 (NVKENEGSIHRSDD) and 162-172 (SAKDEERDRDS). 2 consecutive CCHC-type zinc fingers follow at residues 202–219 (NTCFNCKKYGHRATECSA) and 222–239 (RECANCGDPNHRANECAS). The Q motif signature appears at 298 to 326 (KSFSDSDIPQSMRRNVERAGYTRTTPIQQ). The region spanning 329–513 (LPLVADGKDI…RKLLREDYTM (185 aa)) is the Helicase ATP-binding domain. 342 to 349 (AQTGSGKT) provides a ligand contact to ATP. A DEAD box motif is present at residues 456–459 (DEAD). Residues 549 to 698 (DIDTYTTEKN…VVPSWMKEAA (150 aa)) enclose the Helicase C-terminal domain. Positions 696 to 720 (EAAGGTSNPNKFEKSIDTEEPEEAW) are disordered.

This sequence belongs to the DEAD box helicase family. DDX4/VASA subfamily. Interacts with csn-5. Interacts (via C-terminus) with kgb-1. Interacts with zyx-1.

The protein localises to the cytoplasm. The enzyme catalyses ATP + H2O = ADP + phosphate + H(+). In terms of biological role, probable ATP-binding RNA helicase. The sequence is that of ATP-dependent RNA helicase glh-3 from Caenorhabditis elegans.